The sequence spans 137 residues: Large ribosomal subunit protein uL16c (137 aa).

The interval 1–21 is disordered; the sequence is MLSPKRTKFRRHHRGRMKGKA.

Belongs to the universal ribosomal protein uL16 family. As to quaternary structure, part of the 50S ribosomal subunit.

The protein resides in the plastid. It is found in the chloroplast. The sequence is that of Large ribosomal subunit protein uL16c from Tupiella akineta (Green alga).